The following is a 312-amino-acid chain: HPr kinase/phosphorylase (312 aa).

Residues His-139 and Lys-160 contribute to the active site. 154-161 is a binding site for ATP; it reads GSSGVGKS. Residue Ser-161 participates in Mg(2+) binding. Residue Asp-178 is the Proton acceptor; for phosphorylation activity. Proton donor; for dephosphorylation activity of the active site. Residues 202–211 are important for the catalytic mechanism of both phosphorylation and dephosphorylation; it reads LEIRGLGIIN. Glu-203 serves as a coordination point for Mg(2+). Residue Arg-244 is part of the active site. Positions 265-270 are important for the catalytic mechanism of dephosphorylation; the sequence is PVRPGR.

Belongs to the HPrK/P family. As to quaternary structure, homohexamer. Requires Mg(2+) as cofactor.

The enzyme catalyses [HPr protein]-L-serine + ATP = [HPr protein]-O-phospho-L-serine + ADP + H(+). It carries out the reaction [HPr protein]-O-phospho-L-serine + phosphate + H(+) = [HPr protein]-L-serine + diphosphate. Functionally, catalyzes the ATP- as well as the pyrophosphate-dependent phosphorylation of a specific serine residue in HPr, a phosphocarrier protein of the phosphoenolpyruvate-dependent sugar phosphotransferase system (PTS). HprK/P also catalyzes the pyrophosphate-producing, inorganic phosphate-dependent dephosphorylation (phosphorolysis) of seryl-phosphorylated HPr (P-Ser-HPr). The two antagonistic activities of HprK/P are regulated by several intracellular metabolites, which change their concentration in response to the absence or presence of rapidly metabolisable carbon sources (glucose, fructose, etc.) in the growth medium. Therefore, by controlling the phosphorylation state of HPr, HPrK/P is a sensor enzyme that plays a major role in the regulation of carbon metabolism and sugar transport: it mediates carbon catabolite repression (CCR), and regulates PTS-catalyzed carbohydrate uptake and inducer exclusion. This is HPr kinase/phosphorylase from Listeria monocytogenes serotype 4b (strain CLIP80459).